The following is a 238-amino-acid chain: Tetraspanin-8 (238 aa).

Residues 1–9 (MAGVNVCIK) are Cytoplasmic-facing. A helical transmembrane segment spans residues 10 to 33 (CSMFIFNFVFWLCGAIILSVAISI). Residues 34-57 (RAGKIGQEILAPGDADLNLFIAVN) lie on the Extracellular side of the membrane. Residues 58–72 (ILIFVGAVIMILGFL) traverse the membrane as a helical segment. The Cytoplasmic portion of the chain corresponds to 73 to 83 (GCCGAMKENQF). Residues 84–109 (MMILFFVGLLMILLLQVAAGIVATTR) form a helical membrane-spanning segment. The Extracellular portion of the chain corresponds to 110–206 (KSKTEQALNK…ASISQMFSKR (97 aa)). Asn-118 carries N-linked (GlcNAc...) asparagine glycosylation. The chain crosses the membrane as a helical span at residues 207 to 231 (LFIVLALAFGLAAIEVLGLIFSIVL). Residues 232–238 (YCQMRKK) lie on the Cytoplasmic side of the membrane.

Belongs to the tetraspanin (TM4SF) family. In terms of assembly, forms homooligomers. Interacts with MEP1B. Interacts with integrin alpha3/ITGA3. Interacts with RICTOR and MTOR. Interacts with ADAM17. Interacts with ECE1.

Its subcellular location is the cell membrane. Its function is as follows. Structural component of specialized membrane microdomains known as tetraspanin-enriched microdomains (TERMs), which act as platforms for receptor clustering and signaling. Participates thereby in diverse biological functions such as cell signal transduction, migration and protein trafficking. Promotes ADAM17-mediated TNF-alpha processing through recruitment of ADAM17 to tetraspanin-enriched micro-domains (TEMs). Forms a complex with RICTOR and integrin alpha3/ITGA3 to mediate mTORC2 activation and AKT1 phosphorylation leading to cell migration. Reduces apoptosis and autophagy induced by high glucose levels through forming a complex with mTOR and RICTOR. Contributes to the maintenance of intestinal epithelial barrier and plays a role in the regulation of intestine inflammation by switching interferon gamma receptor 1/IFNGR1 from clathrin-dependent to lipid raft-dependent endocytosis route to limit STAT1 activation magnitude and duration. Acts as a modulator of the endothelin axis by associating with endothelin converting enzyme ECE1 and regulating its activity of conversion of the endothelin-1 precursor to endothelin. The protein is Tetraspanin-8 (TSPAN8) of Bos taurus (Bovine).